The sequence spans 188 residues: Peptidyl-tRNA hydrolase (188 aa).

A tRNA-binding site is contributed by Tyr-14. The Proton acceptor role is filled by His-19. Positions 64, 66, and 112 each coordinate tRNA.

It belongs to the PTH family. In terms of assembly, monomer.

The protein localises to the cytoplasm. The catalysed reaction is an N-acyl-L-alpha-aminoacyl-tRNA + H2O = an N-acyl-L-amino acid + a tRNA + H(+). Its function is as follows. Hydrolyzes ribosome-free peptidyl-tRNAs (with 1 or more amino acids incorporated), which drop off the ribosome during protein synthesis, or as a result of ribosome stalling. In terms of biological role, catalyzes the release of premature peptidyl moieties from peptidyl-tRNA molecules trapped in stalled 50S ribosomal subunits, and thus maintains levels of free tRNAs and 50S ribosomes. Releases Ala-tailed nascent peptides from stalled 50S ribosomal subunits. Non-templated Ala tailing occurs as part of the ribosome quality control (RQC) pathway. In the absence of Ala tails significantly less peptide release occurs. The Ala tail facilitates the interaction of Pth with the nascent peptide-tRNA ester bond as well as promoting nascent chain degradation; 3 Ala residues suffice to stimulate peptide release from stalled 50S ribosomal subunits. Complements a temperature-sensitive pth mutation in E.coli. This Bacillus subtilis (strain 168) protein is Peptidyl-tRNA hydrolase.